Consider the following 149-residue polypeptide: MHRIDVKLLDPRLKTHPPAYASAGAAGLDLRACLDAPVLLHPGETTLVPSGLAIHLADPGLAAMVLPRSGLGHKHGIVLGNLVGLIDSDYQGQVFVSVWNRGRDVFTIQPMERIAQLVVVPVLQVGFNVVDDFAASERGEGGFGSTGKH.

Substrate contacts are provided by residues 68–70 (RSG), asparagine 81, and 85–87 (LID).

This sequence belongs to the dUTPase family. Mg(2+) serves as cofactor.

It carries out the reaction dUTP + H2O = dUMP + diphosphate + H(+). Its pathway is pyrimidine metabolism; dUMP biosynthesis; dUMP from dCTP (dUTP route): step 2/2. Functionally, this enzyme is involved in nucleotide metabolism: it produces dUMP, the immediate precursor of thymidine nucleotides and it decreases the intracellular concentration of dUTP so that uracil cannot be incorporated into DNA. In Azoarcus sp. (strain BH72), this protein is Deoxyuridine 5'-triphosphate nucleotidohydrolase.